A 112-amino-acid polypeptide reads, in one-letter code: U15-hexatoxin-Hi1a (112 aa).

An N-terminal signal peptide occupies residues 1 to 18 (MNTLIAFAVLLLLSTTLG). The propeptide occupies 19-73 (DTDDKVSHEEIQERKELSGISEELLLQQLEAVEAALMEKERLEEMEEDGNSREKR). 3 cysteine pairs are disulfide-bonded: Cys-74–Cys-88, Cys-81–Cys-93, and Cys-87–Cys-107.

The protein belongs to the neurotoxin 14 (magi-1) family. 08 (Ltx-4) subfamily. Expressed by the venom gland.

The protein localises to the secreted. Functionally, probable ion channel inhibitor. This is U15-hexatoxin-Hi1a from Hadronyche infensa (Fraser island funnel-web spider).